Reading from the N-terminus, the 517-residue chain is MAVTAEDILSRLKASIQQPVGGDPTAVNVGTVASVGDGVARISGLRDVMASELLEFKQTKSGETVMGIALNLEKDNVAAVILGDYLEIEEGDLVRSTGKIISVPVGQELLGRVVDPLGRPLDGKGPISASKTREVERIAPGVIERKSVSQPVQTGILAIDALIPIGRGQRELIIGDRQTGKTAIAIDTIINQRGQGMVCVYVAIGQKRSKVAQTITTLEQNGAMDYTIVVNASASESAALQYIAPYSGCAIAEEVMEVGVTVDGNLVKDALIIYDDLSKHAVAYRQVSLLLRRPPGREAYPGDVFYLHSRLLERAARLSEVNGGGSITALPIIETQANDVSAYIPTNVISITDGQIFLESDLFYAGQRPALNVGISVSRVGSSAQTKAMKTVAGKMKLELAQFRELAAFAMFASDLDAGTKAQIERGQRLSELLKQPQYQPIALEDQVIILWVAGNGFLDDVPVARINDFKRDFWQFIHSSYAEVGRAIASEKVLSEATIASLRKAVTEFKQTASYK.

175-182 (GDRQTGKT) contacts ATP.

This sequence belongs to the ATPase alpha/beta chains family. F-type ATPases have 2 components, CF(1) - the catalytic core - and CF(0) - the membrane proton channel. CF(1) has five subunits: alpha(3), beta(3), gamma(1), delta(1), epsilon(1). CF(0) has three main subunits: a(1), b(2) and c(9-12). The alpha and beta chains form an alternating ring which encloses part of the gamma chain. CF(1) is attached to CF(0) by a central stalk formed by the gamma and epsilon chains, while a peripheral stalk is formed by the delta and b chains.

The protein localises to the cell membrane. It catalyses the reaction ATP + H2O + 4 H(+)(in) = ADP + phosphate + 5 H(+)(out). In terms of biological role, produces ATP from ADP in the presence of a proton gradient across the membrane. The alpha chain is a regulatory subunit. This chain is ATP synthase subunit alpha, found in Herpetosiphon aurantiacus (strain ATCC 23779 / DSM 785 / 114-95).